The primary structure comprises 438 residues: Methylenetetrahydrofolate--tRNA-(uracil-5-)-methyltransferase TrmFO 2 (438 aa).

9–14 (GAGLAG) is a binding site for FAD.

It belongs to the MnmG family. TrmFO subfamily. The cofactor is FAD.

Its subcellular location is the cytoplasm. The catalysed reaction is uridine(54) in tRNA + (6R)-5,10-methylene-5,6,7,8-tetrahydrofolate + NADH + H(+) = 5-methyluridine(54) in tRNA + (6S)-5,6,7,8-tetrahydrofolate + NAD(+). It carries out the reaction uridine(54) in tRNA + (6R)-5,10-methylene-5,6,7,8-tetrahydrofolate + NADPH + H(+) = 5-methyluridine(54) in tRNA + (6S)-5,6,7,8-tetrahydrofolate + NADP(+). Functionally, catalyzes the folate-dependent formation of 5-methyl-uridine at position 54 (M-5-U54) in all tRNAs. In Mycoplasma mycoides subsp. mycoides SC (strain CCUG 32753 / NCTC 10114 / PG1), this protein is Methylenetetrahydrofolate--tRNA-(uracil-5-)-methyltransferase TrmFO 2.